The sequence spans 336 residues: 3-isopropylmalate dehydrogenase (336 aa).

The substrate site is built by Arg87, Arg97, Arg121, and Asp211. Mg(2+) is bound by residues Asp211, Asp235, and Asp239. Position 271–283 (271–283) interacts with NAD(+); sequence GSAPDIAGQGIAD.

The protein belongs to the isocitrate and isopropylmalate dehydrogenases family. LeuB type 2 subfamily. Homodimer. Mg(2+) serves as cofactor. The cofactor is Mn(2+).

The protein resides in the cytoplasm. The catalysed reaction is (2R,3S)-3-isopropylmalate + NAD(+) = 4-methyl-2-oxopentanoate + CO2 + NADH. It functions in the pathway amino-acid biosynthesis; L-leucine biosynthesis; L-leucine from 3-methyl-2-oxobutanoate: step 3/4. Its function is as follows. Catalyzes the oxidation of 3-carboxy-2-hydroxy-4-methylpentanoate (3-isopropylmalate) to 3-carboxy-4-methyl-2-oxopentanoate. The product decarboxylates to 4-methyl-2 oxopentanoate. The chain is 3-isopropylmalate dehydrogenase from Mycobacterium bovis (strain ATCC BAA-935 / AF2122/97).